Here is a 350-residue protein sequence, read N- to C-terminus: DNA-directed RNA polymerase subunit alpha (350 aa).

The tract at residues 1–226 (MLISQRPTLS…ELFGLARELN (226 aa)) is alpha N-terminal domain (alpha-NTD). The interval 241–350 (ADHIASFALP…NQDYAETEQL (110 aa)) is alpha C-terminal domain (alpha-CTD). A disordered region spans residues 328–350 (GTWTSDAGYDLDDNQDYAETEQL). Over residues 336–350 (YDLDDNQDYAETEQL) the composition is skewed to acidic residues.

This sequence belongs to the RNA polymerase alpha chain family. Homodimer. The RNAP catalytic core consists of 2 alpha, 1 beta, 1 beta' and 1 omega subunit. When a sigma factor is associated with the core the holoenzyme is formed, which can initiate transcription.

The enzyme catalyses RNA(n) + a ribonucleoside 5'-triphosphate = RNA(n+1) + diphosphate. In terms of biological role, DNA-dependent RNA polymerase catalyzes the transcription of DNA into RNA using the four ribonucleoside triphosphates as substrates. This Mycolicibacterium smegmatis (strain ATCC 700084 / mc(2)155) (Mycobacterium smegmatis) protein is DNA-directed RNA polymerase subunit alpha.